The primary structure comprises 251 residues: Triosephosphate isomerase (251 aa).

A substrate-binding site is contributed by 9 to 11 (NWK). Catalysis depends on histidine 95, which acts as the Electrophile. The Proton acceptor role is filled by glutamate 167. Substrate is bound by residues glycine 173, serine 213, and 234–235 (GG).

The protein belongs to the triosephosphate isomerase family. In terms of assembly, homodimer.

Its subcellular location is the cytoplasm. The catalysed reaction is D-glyceraldehyde 3-phosphate = dihydroxyacetone phosphate. It functions in the pathway carbohydrate biosynthesis; gluconeogenesis. Its pathway is carbohydrate degradation; glycolysis; D-glyceraldehyde 3-phosphate from glycerone phosphate: step 1/1. Its function is as follows. Involved in the gluconeogenesis. Catalyzes stereospecifically the conversion of dihydroxyacetone phosphate (DHAP) to D-glyceraldehyde-3-phosphate (G3P). This is Triosephosphate isomerase from Fusobacterium nucleatum subsp. nucleatum (strain ATCC 25586 / DSM 15643 / BCRC 10681 / CIP 101130 / JCM 8532 / KCTC 2640 / LMG 13131 / VPI 4355).